The following is a 164-amino-acid chain: FGFHQQMLNYILSPFFYYQPDPWLTHKWKDEKRNMRKHSISFKGLIRAVLFSQTLIKSALAKRVRCTVLYATETGKSKTLAKKLNTMMNYAFSSKVVCMEDYNFSELEKESLLFVVTSTFGNGDCPGNGESFKKQLLSLNNLRNQVRYSVFGLGSRMYPHFCAF.

Residue Phe3 coordinates (6R)-L-erythro-5,6,7,8-tetrahydrobiopterin. Heme b is bound at residue Tyr18. The interval 42–62 (FKGLIRAVLFSQTLIKSALAK) is calmodulin-binding. The Flavodoxin-like domain maps to 66 to 164 (CTVLYATETG…SRMYPHFCAF (99 aa)). Positions 72, 73, 74, 76, 77, 118, 119, 155, and 162 each coordinate FMN.

Belongs to the NOS family. As to quaternary structure, homodimer. Heme b serves as cofactor. Requires FAD as cofactor. The cofactor is FMN. It depends on (6R)-L-erythro-5,6,7,8-tetrahydrobiopterin as a cofactor.

The protein resides in the cytoplasm. It is found in the cytosol. It carries out the reaction 2 L-arginine + 3 NADPH + 4 O2 + H(+) = 2 L-citrulline + 2 nitric oxide + 3 NADP(+) + 4 H2O. Not stimulated by calcium/calmodulin. Its function is as follows. Produces nitric oxide (NO) which is a messenger molecule with diverse functions throughout the body. In macrophages, NO mediates tumoricidal and bactericidal actions. Also has nitrosylase activity and mediates cysteine S-nitrosylation of cytoplasmic target proteins such COX2. In Carassius auratus (Goldfish), this protein is Nitric oxide synthase, inducible (nos2).